The primary structure comprises 24 residues: FMGGLIKAATKIVPAAYCAITKKC.

Cysteine 18 and cysteine 24 are joined by a disulfide.

In terms of tissue distribution, expressed by the skin glands.

The protein localises to the secreted. Has antibacterial activity against the Gram-positive bacterium S.aureus ATCC 25923 (MIC=3 uM) and the Gram-negative bacterium E.coli ATCC 25726 (MIC=24 uM). The sequence is that of Brevinin-1PTa from Pulchrana picturata (Malaysian fire frog).